The following is a 496-amino-acid chain: Cytochrome P450 71A15 (496 aa).

The chain crosses the membrane as a helical span at residues 3 to 23; the sequence is IIIISLCLATILAFLLLKPLL. Cys-439 is a binding site for heme.

This sequence belongs to the cytochrome P450 family. Heme serves as cofactor.

The protein resides in the membrane. The protein is Cytochrome P450 71A15 (CYP71A15) of Arabidopsis thaliana (Mouse-ear cress).